The sequence spans 365 residues: Flagellar P-ring protein (365 aa).

Positions Met-1 to Ala-19 are cleaved as a signal peptide.

The protein belongs to the FlgI family. In terms of assembly, the basal body constitutes a major portion of the flagellar organelle and consists of four rings (L,P,S, and M) mounted on a central rod.

It is found in the periplasm. The protein resides in the bacterial flagellum basal body. Its function is as follows. Assembles around the rod to form the L-ring and probably protects the motor/basal body from shearing forces during rotation. The polypeptide is Flagellar P-ring protein (Sodalis glossinidius (strain morsitans)).